A 422-amino-acid chain; its full sequence is MKKNTSKTTMRINKQDALCTPHSHDPRDLQNMLDGGEYAPFVSPPMLESNFIQVNRRGESIYLHNRANWVTVGICFSSSTHKIPNVMLLAHLTPGAQKDTETLFKSLLTSPPAEKLVLTRFLPLQFVTLSVHDAENMSLKVKLVSGRAYYLQLCTSAYKQDTLFSQWVALISLLNQEKAKVSKVSEVSSLSGITNSTDITGSMDVTDVTTFTAILTPYMYAGTGPEHVRDSIDFPEFTDITDITDVTDLPENEVPEVPDVRIVTEVIEVREATEVTDSSDITNCSGVTVVFENNDLIRAKQEEKEKLKNILKPGCLQDTKSKSELKESSKHVTISNITLTFEGKRYFQTTLTPVESEANTSKEMKDKTSEEKMPDFQSTALKAEESRSLRTESNTSVLSPHIKSPSNFLKLVPHLSAPFSRE.

Positions 353 to 404 (PVESEANTSKEMKDKTSEEKMPDFQSTALKAEESRSLRTESNTSVLSPHIKS) are disordered. Basic and acidic residues predominate over residues 360 to 374 (TSKEMKDKTSEEKMP).

It belongs to the GARIN family. In terms of assembly, interacts with CALM1. In terms of tissue distribution, expressed in spermatozoa (at protein level).

The protein resides in the cell projection. It is found in the cilium. Its subcellular location is the flagellum. In terms of biological role, seems to play a role in sperm motility. In Homo sapiens (Human), this protein is Golgi-associated RAB2 interactor protein 2.